The primary structure comprises 100 residues: MSNLRIVCQHCPSVVFNNKRPDVVKRPTMSAMLHSETQEDLETDDFFLLKDPFAFDNVSVSKPLANNYKLLACADCEKGPLGYYDSKNNEYLLLCSLEKN.

The MSS4 domain maps to 1–100 (MSNLRIVCQH…YLLLCSLEKN (100 aa)). Cys8, Cys11, Cys73, and Cys76 together coordinate Zn(2+).

Belongs to the DSS4/MSS4 family.

In terms of biological role, guanine-nucleotide-releasing protein that acts on members of the sec4/ypt1/rab subfamily. This chain is Guanine nucleotide exchange factor MSS4 homolog, found in Schizosaccharomyces pombe (strain 972 / ATCC 24843) (Fission yeast).